The following is a 78-amino-acid chain: Acyl carrier protein (78 aa).

A Carrier domain is found at 2-77 (SNIEQQVKKI…LAIDYINAHN (76 aa)). O-(pantetheine 4'-phosphoryl)serine is present on S37.

It belongs to the acyl carrier protein (ACP) family. 4'-phosphopantetheine is transferred from CoA to a specific serine of apo-ACP by AcpS. This modification is essential for activity because fatty acids are bound in thioester linkage to the sulfhydryl of the prosthetic group.

It is found in the cytoplasm. The protein operates within lipid metabolism; fatty acid biosynthesis. In terms of biological role, carrier of the growing fatty acid chain in fatty acid biosynthesis. This Neisseria meningitidis serogroup C / serotype 2a (strain ATCC 700532 / DSM 15464 / FAM18) protein is Acyl carrier protein.